A 1164-amino-acid chain; its full sequence is WASH complex subunit 5 (1164 aa).

Belongs to the strumpellin family. In terms of assembly, probable component of the WASH complex.

The chain is WASH complex subunit 5 from Dictyostelium discoideum (Social amoeba).